A 341-amino-acid polypeptide reads, in one-letter code: uncharacterized protein (341 aa).

Position 58–82 (58–82 (ITGGSSGIGAAAAKKIAEAGGTVVL)) interacts with NADP(+). A substrate-binding site is contributed by serine 194. Residue tyrosine 207 is the Proton acceptor of the active site. The segment at 309 to 329 (DSSAAKGSESQTDTSELDKRS) is disordered.

This sequence belongs to the short-chain dehydrogenases/reductases (SDR) family.

This is an uncharacterized protein from Mycobacterium bovis (strain ATCC BAA-935 / AF2122/97).